The sequence spans 141 residues: uncharacterized protein (141 aa).

It belongs to the mimivirus L163/R849 family.

This is an uncharacterized protein from Acanthamoeba polyphaga mimivirus (APMV).